A 62-amino-acid polypeptide reads, in one-letter code: UPF0434 protein Fphi_1862 (62 aa).

The protein belongs to the UPF0434 family.

The polypeptide is UPF0434 protein Fphi_1862 (Francisella philomiragia subsp. philomiragia (strain ATCC 25017 / CCUG 19701 / FSC 153 / O#319-036)).